A 310-amino-acid polypeptide reads, in one-letter code: Aspartate carbamoyltransferase catalytic subunit (310 aa).

Residues Arg-59 and Thr-60 each coordinate carbamoyl phosphate. Lys-87 serves as a coordination point for L-aspartate. Residues Arg-109, His-137, and Gln-140 each contribute to the carbamoyl phosphate site. Arg-170 and Arg-225 together coordinate L-aspartate. Residues Gly-266 and Pro-267 each coordinate carbamoyl phosphate.

It belongs to the aspartate/ornithine carbamoyltransferase superfamily. ATCase family. In terms of assembly, heterododecamer (2C3:3R2) of six catalytic PyrB chains organized as two trimers (C3), and six regulatory PyrI chains organized as three dimers (R2).

It carries out the reaction carbamoyl phosphate + L-aspartate = N-carbamoyl-L-aspartate + phosphate + H(+). The protein operates within pyrimidine metabolism; UMP biosynthesis via de novo pathway; (S)-dihydroorotate from bicarbonate: step 2/3. Its function is as follows. Catalyzes the condensation of carbamoyl phosphate and aspartate to form carbamoyl aspartate and inorganic phosphate, the committed step in the de novo pyrimidine nucleotide biosynthesis pathway. The polypeptide is Aspartate carbamoyltransferase catalytic subunit (Pelobacter propionicus (strain DSM 2379 / NBRC 103807 / OttBd1)).